Here is a 430-residue protein sequence, read N- to C-terminus: Probable sugar isomerase mlr5709 (430 aa).

Mn(2+) is bound by residues His257, Asp289, and Asp291.

This sequence belongs to the rhamnose isomerase family. Mn(2+) serves as cofactor.

The polypeptide is Probable sugar isomerase mlr5709 (Mesorhizobium japonicum (strain LMG 29417 / CECT 9101 / MAFF 303099) (Mesorhizobium loti (strain MAFF 303099))).